A 251-amino-acid polypeptide reads, in one-letter code: Cell division protein ZapD (251 aa).

Belongs to the ZapD family. Interacts with FtsZ.

The protein localises to the cytoplasm. In terms of biological role, cell division factor that enhances FtsZ-ring assembly. Directly interacts with FtsZ and promotes bundling of FtsZ protofilaments, with a reduction in FtsZ GTPase activity. This is Cell division protein ZapD from Burkholderia vietnamiensis (strain G4 / LMG 22486) (Burkholderia cepacia (strain R1808)).